Reading from the N-terminus, the 128-residue chain is MEIPEDLRYTREHEWARRKGSAIVVGITDFAQQQLGDVVYVELPDVGDPVKKGESFGVVESTKAVSELFAPISGKVIEVNDPLSDAPETINEDPYEEGWMITIEPSDPKDLEALMDAAAYKAFVEEQE.

Residues 22–104 enclose the Lipoyl-binding domain; that stretch reads AIVVGITDFA…YEEGWMITIE (83 aa). Lysine 63 carries the post-translational modification N6-lipoyllysine.

Belongs to the GcvH family. The glycine cleavage system is composed of four proteins: P, T, L and H. It depends on (R)-lipoate as a cofactor.

Its function is as follows. The glycine cleavage system catalyzes the degradation of glycine. The H protein shuttles the methylamine group of glycine from the P protein to the T protein. The protein is Glycine cleavage system H protein of Anaeromyxobacter dehalogenans (strain 2CP-1 / ATCC BAA-258).